The primary structure comprises 212 residues: Probable GTP-binding protein EngB (212 aa).

The EngB-type G domain occupies 40–212; the sequence is SLPEIAFVGK…KASLAKCIKA (173 aa). GTP is bound by residues 48-55, 75-79, 93-96, 160-163, and 191-193; these read GKSNVGKS, GRTRQ, DLPG, TKSD, and VSS. Mg(2+)-binding residues include serine 55 and threonine 77.

It belongs to the TRAFAC class TrmE-Era-EngA-EngB-Septin-like GTPase superfamily. EngB GTPase family. The cofactor is Mg(2+).

Functionally, necessary for normal cell division and for the maintenance of normal septation. In Rickettsia akari (strain Hartford), this protein is Probable GTP-binding protein EngB.